Consider the following 671-residue polypeptide: Huntingtin-associated protein 1 (671 aa).

2 disordered regions span residues 1-83 and 258-289; these read MRPK…ARRP and DSDE…EDLQ. Over residues 20-29 the composition is skewed to low complexity; that stretch reads PAALTCAPSP. The 356-residue stretch at 106-461 folds into the HAP1 N-terminal domain; it reads RFVFQGPFGS…EEVKTLRQQP (356 aa). Residues 212-427 are a coiled coil; the sequence is QSLVKQNSVL…IQMQLQEESV (216 aa). Residues 258–288 are compositionally biased toward acidic residues; the sequence is DSDEEDEDEEEEEEEKEAEEEQEEEEAEEDL.

Self-associates. Interacts with HTT/huntingtin; enhanced by an expanded polyglutamine repeat within HTT. Interacts with DCTN1; decreased in presence of HTT with expanded polyglutamine repeat. Interacts with KLC2. Interacts with ITPR1 and APP. Interacts with AR; decreased by an expanded polyglutamine repeat within AR. Interacts with YWHAZ. Interacts with BDNF and SORT1; probably forming a complex involved in proBDNF trafficking, degradation and processing. Interacts with TBP, AHI1, HGS and KALRN. Interacts with KIF5A, KIF5B, KIF5C and GABRB3; indicative for an HAP1:KIF5 complex transporting a GABA(A) receptor as cargo. Interacts with ATXN3; in STBs with ATXN3 poly-Gln region with 27 repeats (normal population) and 79 repeats (spinocerebellar ataxia 3 (SCA3) patients) associating in the same strength. Interacts with NTRK2; HAP1 stabilizes association of NTRK2 with SORT1 preventing NTRK2 degradation. Interacts with CFAP263. In terms of tissue distribution, predominantly expressed in brain. Selectively expressed in neurons.

The protein localises to the cytoplasm. The protein resides in the cell projection. Its subcellular location is the axon. It localises to the presynapse. It is found in the cytoskeleton. The protein localises to the dendritic spine. The protein resides in the dendrite. Its subcellular location is the lysosome. It localises to the endoplasmic reticulum. It is found in the mitochondrion. The protein localises to the nucleus. The protein resides in the cytoplasmic vesicle. Its subcellular location is the autophagosome. It localises to the early endosome. It is found in the growth cone. The protein localises to the neuron projection. The protein resides in the secretory vesicle. Its subcellular location is the synaptic vesicle. In terms of biological role, originally identified as neuronal protein that specifically associates with HTT/huntingtin and the binding is enhanced by an expanded polyglutamine repeat within HTT possibly affecting HAP1 interaction properties. Both HTT and HAP1 are involved in intracellular trafficking and HAP1 is proposed to link HTT to motor proteins and/or transport cargos. Seems to play a role in vesicular transport within neurons and axons such as from early endosomes to late endocytic compartments and to promote neurite outgrowth. The vesicular transport function via association with microtubule-dependent transporters can be attenuated by association with mutant HTT. Involved in the axonal transport of BDNF and its activity-dependent secretion; the function seems to involve HTT, DCTN1 and a complex with SORT1. Involved in APP trafficking and seems to facilitate APP anterograde transport and membrane insertion thereby possibly reducing processing into amyloid beta. Involved in delivery of gamma-aminobutyric acid (GABA(A)) receptors to synapses; the function is dependent on kinesin motor protein KIF5 and is disrupted by HTT with expanded polyglutamine repeat. Involved in regulation of autophagosome motility by promoting efficient retrograde axonal transport. Seems to be involved in regulation of membrane receptor recycling and degradation, and respective signal transduction, including GABA(A) receptors, tyrosine kinase receptors, EGFR, IP3 receptor and androgen receptor. Among others suggested to be involved in control of feeding behavior (involving hypothalamic GABA(A) receptors), cerebellar and brainstem development (involving AHI1 and NTRK1/TrkA), postnatal neurogenesis (involving hypothalamic NTRK2/TrkB), and ITPR1/InsP3R1-mediated Ca(2+) release (involving HTT and possibly the effect of mutant HTT). Via association with DCTN1/dynactin p150-glued and HTT/huntingtin involved in cytoplasmic retention of REST in neurons. May be involved in ciliogenesis. Involved in regulation of exocytosis. Seems to be involved in formation of cytoplasmic inclusion bodies (STBs). In case of anomalous expression of TBP, can sequester a subset of TBP into STBs; sequestration is enhanced by an expanded polyglutamine repeat within TBP. HAP1-containing STBs have been proposed to play a protective role against neurodegeneration in Huntigton disease (HD) and spinocerebellar ataxia 17 (SCA17). The polypeptide is Huntingtin-associated protein 1 (HAP1) (Homo sapiens (Human)).